The following is a 91-amino-acid chain: UPF0298 protein OB1449 (91 aa).

Belongs to the UPF0298 family.

Its subcellular location is the cytoplasm. The protein is UPF0298 protein OB1449 of Oceanobacillus iheyensis (strain DSM 14371 / CIP 107618 / JCM 11309 / KCTC 3954 / HTE831).